The primary structure comprises 185 residues: Ribosome-recycling factor (185 aa).

The protein belongs to the RRF family.

The protein localises to the cytoplasm. Responsible for the release of ribosomes from messenger RNA at the termination of protein biosynthesis. May increase the efficiency of translation by recycling ribosomes from one round of translation to another. This chain is Ribosome-recycling factor, found in Xanthomonas oryzae pv. oryzae (strain MAFF 311018).